A 156-amino-acid chain; its full sequence is 6,7-dimethyl-8-ribityllumazine synthase (156 aa).

Residues Phe-23, 57-59 (AYE), and 81-83 (AII) each bind 5-amino-6-(D-ribitylamino)uracil. 86 to 87 (GT) contributes to the (2S)-2-hydroxy-3-oxobutyl phosphate binding site. His-89 serves as the catalytic Proton donor. Phe-114 is a 5-amino-6-(D-ribitylamino)uracil binding site. Arg-128 provides a ligand contact to (2S)-2-hydroxy-3-oxobutyl phosphate.

The protein belongs to the DMRL synthase family.

The catalysed reaction is (2S)-2-hydroxy-3-oxobutyl phosphate + 5-amino-6-(D-ribitylamino)uracil = 6,7-dimethyl-8-(1-D-ribityl)lumazine + phosphate + 2 H2O + H(+). The protein operates within cofactor biosynthesis; riboflavin biosynthesis; riboflavin from 2-hydroxy-3-oxobutyl phosphate and 5-amino-6-(D-ribitylamino)uracil: step 1/2. Its function is as follows. Catalyzes the formation of 6,7-dimethyl-8-ribityllumazine by condensation of 5-amino-6-(D-ribitylamino)uracil with 3,4-dihydroxy-2-butanone 4-phosphate. This is the penultimate step in the biosynthesis of riboflavin. The protein is 6,7-dimethyl-8-ribityllumazine synthase of Helicobacter pylori (strain J99 / ATCC 700824) (Campylobacter pylori J99).